The sequence spans 310 residues: MKGKNYKIVSLYSFFPFQENLIIDLKSKLLEIGYENDLSGLLIFASEGINGTICAEKNVIDIVINLLNKYADNRNLNIKVNFSKKKVFKKLKIKIKKEIVTMGVPEINPSENNGTYIDSANWNKLIKNQNTIVIDTRNHYEVSVGTFQNSINPNTRNFSEFPKWVDDQLDTHLENKESTNIAMFCTGGIRCEKATSLLKKKGYKNIYHLQGGILQYLDDIPKEKNLFEGECYVFDKRVALDQELEKGSYSICHACGMPVSIQDQERKEYRKGIQCHFCIDQFSDDDRKRFEERQKQIDRLKVGNHKIFKD.

In terms of domain architecture, Rhodanese spans 127-225 (KNQNTIVIDT…YLDDIPKEKN (99 aa)). Residue Cys185 is the Cysteine persulfide intermediate of the active site.

This sequence belongs to the TrhO family.

It carries out the reaction uridine(34) in tRNA + AH2 + O2 = 5-hydroxyuridine(34) in tRNA + A + H2O. Functionally, catalyzes oxygen-dependent 5-hydroxyuridine (ho5U) modification at position 34 in tRNAs. This is tRNA uridine(34) hydroxylase from Prochlorococcus marinus (strain MIT 9312).